Here is a 203-residue protein sequence, read N- to C-terminus: Probable NADPH:quinone oxidoreductase 2 (203 aa).

This sequence belongs to the SsuE family. Homotetramer. It depends on FMN as a cofactor.

The catalysed reaction is a quinone + NADH + H(+) = a quinol + NAD(+). The enzyme catalyses a quinone + NADPH + H(+) = a quinol + NADP(+). Its function is as follows. The enzyme apparently serves as a quinone reductase in connection with conjugation reactions of hydroquinones involved in detoxification pathways. This Oryza sativa subsp. japonica (Rice) protein is Probable NADPH:quinone oxidoreductase 2.